A 295-amino-acid polypeptide reads, in one-letter code: Probable aspartoacylase (295 aa).

His-13 and Glu-16 together coordinate Zn(2+). Substrate contacts are provided by residues Arg-54 and 61–62 (NR). His-100 provides a ligand contact to Zn(2+). The substrate site is built by Glu-158 and Tyr-268.

The protein belongs to the AspA/AstE family. Aspartoacylase subfamily. Requires Zn(2+) as cofactor.

It carries out the reaction an N-acyl-L-aspartate + H2O = a carboxylate + L-aspartate. The protein is Probable aspartoacylase of Prochlorococcus marinus subsp. pastoris (strain CCMP1986 / NIES-2087 / MED4).